A 122-amino-acid polypeptide reads, in one-letter code: Histone H2B.2 (122 aa).

Positions 1–10 are enriched in low complexity; it reads MAPKKAPAAT. A disordered region spans residues 1-28; the sequence is MAPKKAPAATTEKKVKKAPTTEKKNKKK. N,N,N-trimethylalanine is present on Ala2. Residues Lys5 and Lys42 each carry the N6-acetyllysine modification. Residue Lys116 forms a Glycyl lysine isopeptide (Lys-Gly) (interchain with G-Cter in ubiquitin) linkage.

This sequence belongs to the histone H2B family. In terms of assembly, the nucleosome is a histone octamer containing two molecules each of H2A, H2B, H3 and H4 assembled in one H3-H4 heterotetramer and two H2A-H2B heterodimers. The octamer wraps approximately 147 bp of DNA. Acetylation occurs almost exclusively in the MAC. In terms of processing, monoubiquitination to form H2BK115ub1 gives a specific tag for epigenetic transcriptional activation and is also prerequisite for H3K4me and H3K79me formation.

The protein resides in the nucleus. It is found in the chromosome. In terms of biological role, core component of nucleosome. Nucleosomes wrap and compact DNA into chromatin, limiting DNA accessibility to the cellular machineries which require DNA as a template. Histones thereby play a central role in transcription regulation, DNA repair, DNA replication and chromosomal stability. DNA accessibility is regulated via a complex set of post-translational modifications of histones, also called histone code, and nucleosome remodeling. This is Histone H2B.2 (HTB2) from Tetrahymena thermophila (strain SB210).